A 144-amino-acid chain; its full sequence is Mediator of RNA polymerase II transcription subunit 21 (144 aa).

It belongs to the Mediator complex subunit 21 family. As to quaternary structure, interacts with PPARG. Component of the Mediator complex, which is composed of MED1, MED4, MED6, MED7, MED8, MED9, MED10, MED11, MED12, MED13, MED13L, MED14, MED15, MED16, MED17, MED18, MED19, MED20, MED21, MED22, MED23, MED24, MED25, MED26, MED27, MED29, MED30, MED31, CCNC, CDK8 and CDC2L6/CDK11. The MED12, MED13, CCNC and CDK8 subunits form a distinct module termed the CDK8 module. Mediator containing the CDK8 module is less active than Mediator lacking this module in supporting transcriptional activation. Individual preparations of the Mediator complex lacking one or more distinct subunits have been variously termed ARC, CRSP, DRIP, PC2, SMCC and TRAP. Interacts with THRA in a ligand-dependent fashion.

Its subcellular location is the nucleus. In terms of biological role, component of the Mediator complex, a coactivator involved in the regulated transcription of nearly all RNA polymerase II-dependent genes. Mediator functions as a bridge to convey information from gene-specific regulatory proteins to the basal RNA polymerase II transcription machinery. Mediator is recruited to promoters by direct interactions with regulatory proteins and serves as a scaffold for the assembly of a functional preinitiation complex with RNA polymerase II and the general transcription factors. The sequence is that of Mediator of RNA polymerase II transcription subunit 21 (MED21) from Homo sapiens (Human).